Reading from the N-terminus, the 183-residue chain is Threonylcarbamoyl-AMP synthase (183 aa).

Residues 1–183 (MNFTEIAEKL…LLTDQLIREG (183 aa)) form the YrdC-like domain.

It belongs to the SUA5 family. TsaC subfamily.

It localises to the cytoplasm. The enzyme catalyses L-threonine + hydrogencarbonate + ATP = L-threonylcarbamoyladenylate + diphosphate + H2O. In terms of biological role, required for the formation of a threonylcarbamoyl group on adenosine at position 37 (t(6)A37) in tRNAs that read codons beginning with adenine. Catalyzes the conversion of L-threonine, HCO(3)(-)/CO(2) and ATP to give threonylcarbamoyl-AMP (TC-AMP) as the acyladenylate intermediate, with the release of diphosphate. The protein is Threonylcarbamoyl-AMP synthase of Actinobacillus succinogenes (strain ATCC 55618 / DSM 22257 / CCUG 43843 / 130Z).